The primary structure comprises 782 residues: MERARPEPPPPPPPPPRQPPRPTPPRPLRPAPPAQPVEAATFRAAAAERSQSPSAQATAAMAAVASSCGEAAAAGAQAAGTRRLLQVKPEQVLLLPPGGPGVPPAPDEGAAAAAAAAAAAASSAQARLLQLRPELLLLPPQSAADGGPCRPELHPMQPRTLLVKAEKQELGAGLDLSVGSRRTTEAGPRASRAAKLDGTGKALDGRRSDEKKAKLEAEEAPRDALKGGEGKSLLAIGEGVIKTEEPDRPRDDCRLGTEATSNGLVHSSKEAILAQPPSAFGPHQQDLRFPLTLHTVPPGARIQFQGPPPSELIRLSKVPLTPVPIKMQSLLEPSVKIETKDVPLTVLPSDAGIPDTPFSKDRNGHVKRPMNAFMVWARIHRPALAKANPAANNAEISVQLGLEWNKLSEEQKKPYYDEAQKIKEKHREEFPGWVYQPRPGKRKRFPLSVSNVFSGTTQNIISTNPTTIYPYRSPTYSVVIPGLQNTITHPVGEAPPAIQLPTPAVQRPSPITLFQPSVSSTGPVAVPPPSLTPRPSLPPQRFSGPSQTDIHRLPSGSSRSVKRSTPGSLESTTRIPAGASTAHARFATSPIQPPKEYASVSTCPRSTPIPPATPIPHSHVYQPPPLGHPATLFGTPPRFSFHHPYFLPGPHYFPSSTCPYSRPPFGYGNFPSSMPECLGYYEDRYQKHEAIFSALNRDYPFRDYPDEHTHSEDSRSCESMDGPPYYSSHGHGGEEYLNAMPTLDIGALENVFTAPASAPSGVQQVNVTDSDEEEEEKVLRNL.

Disordered stretches follow at residues 1–37, 95–117, and 139–226; these read MERA…AQPV, LPPG…AAAA, and PPQS…DALK. Pro residues-rich tracts occupy residues 7 to 35 and 97 to 106; these read EPPP…PPAQ and PGGPGVPPAP. The segment covering 203 to 226 has biased composition (basic and acidic residues); that stretch reads LDGRRSDEKKAKLEAEEAPRDALK. Residues 366-434 constitute a DNA-binding region (HMG box); that stretch reads VKRPMNAFMV…KHREEFPGWV (69 aa). Disordered stretches follow at residues 501–604, 704–724, and 756–782; these read PTPA…STCP, YPDE…DGPP, and ASAP…LRNL. Residues 512–522 show a composition bias toward polar residues; the sequence is TLFQPSVSSTG. Positions 525 to 538 are enriched in pro residues; that stretch reads AVPPPSLTPRPSLP. Positions 555–574 are enriched in polar residues; sequence SGSSRSVKRSTPGSLESTTR. Residues 704–718 are compositionally biased toward basic and acidic residues; it reads YPDEHTHSEDSRSCE.

In terms of assembly, interacts with CTNNB1, competitively inhibiting CTNNB1-TCF7L2/TCF4 interaction. As to expression, expressed in the lung (at protein level). Expressed in testes (at protein level). Expressed in preleptotene spermatocytes, round spermatids, and elongated spermatids in the testis (at protein level). Expressed in pachytene spermatocytes during stages 3 to 8 of spermatogenesis (at protein level). Increased expression in diplotene spermatocytes at stage 9-11 and in metaphase spermatocytes or secondary spermatocytes at stage 12. Expressed in ovaries.

It localises to the nucleus. The protein localises to the cytoplasm. Its function is as follows. Acts both as a transcriptional activator and a repressor. Binds to the DNA sequence 5'-ACAAT-3' and shows a preference for guanine residues surrounding this core motif. Binds to its own promoter and activates its own transcription. Required to activate the expression of postmeiotic genes involved in spermiogenesis. Binds to the promoter region of CTNNB1 and represses its transcription which leads to inhibition of Wnt signaling. Also inhibits Wnt signaling by binding to the CTNNB1 protein, preventing interaction of CTNNB1 with TCF7L2/TCF4. The protein is Transcription factor SOX-30 (Sox30) of Mus musculus (Mouse).